The following is a 257-amino-acid chain: Phosphonates import ATP-binding protein PhnC (257 aa).

Residues 4 to 248 (IEFKDVSKVY…VFNHIYGRSI (245 aa)) enclose the ABC transporter domain.

This sequence belongs to the ABC transporter superfamily. Phosphonates importer (TC 3.A.1.9.1) family. As to quaternary structure, the complex is composed of two ATP-binding proteins (PhnC), two transmembrane proteins (PhnE) and a solute-binding protein (PhnD).

Its subcellular location is the cell membrane. The enzyme catalyses phosphonate(out) + ATP + H2O = phosphonate(in) + ADP + phosphate + H(+). Functionally, part of the ABC transporter complex PhnCDE involved in phosphonates import. Responsible for energy coupling to the transport system. The chain is Phosphonates import ATP-binding protein PhnC from Staphylococcus epidermidis (strain ATCC 35984 / DSM 28319 / BCRC 17069 / CCUG 31568 / BM 3577 / RP62A).